Here is a 626-residue protein sequence, read N- to C-terminus: (+)-3-carene synthase 2, chloroplastic (626 aa).

Residues 1–45 constitute a chloroplast transit peptide; it reads MSLISAVPLASSCVSKSLISSVREHTALRRAIATLQMSRRGKSVA. Mg(2+) contacts are provided by D377, D381, and D529. The DDXXD motif signature appears at 377-381; the sequence is DDMYD.

It belongs to the terpene synthase family. Tpsd subfamily. It depends on Mg(2+) as a cofactor. Mn(2+) serves as cofactor.

It localises to the plastid. Its subcellular location is the chloroplast. The enzyme catalyses (2E)-geranyl diphosphate = (+)-car-3-ene + diphosphate. Its pathway is terpene metabolism; oleoresin biosynthesis. It functions in the pathway secondary metabolite biosynthesis; terpenoid biosynthesis. Its function is as follows. Monoterpene synthase (TPS) involved in the biosynthesis of monoterpene natural products included in conifer oleoresin secretions and volatile emissions; these compounds contribute to biotic and abiotic stress defense against herbivores and pathogens. Catalyzes the conversion of (2E)-geranyl diphosphate (GPP) to (+)-3-carene. In Pinus banksiana (Jack pine), this protein is (+)-3-carene synthase 2, chloroplastic.